The following is an 84-amino-acid chain: MTFYERTVDLGLKAYKTTLSPFIGRQCRYLPTCSEYAAQALKDHGPLKGSWLAVGRICRCNPLGGSGYDPPPPPKTPRKWKCEE.

Positions 63-84 (LGGSGYDPPPPPKTPRKWKCEE) are disordered.

Belongs to the UPF0161 family.

It localises to the cell inner membrane. Functionally, could be involved in insertion of integral membrane proteins into the membrane. This is Putative membrane protein insertion efficiency factor from Caulobacter sp. (strain K31).